Reading from the N-terminus, the 3567-residue chain is Zinc finger homeobox protein 4 (3567 aa).

An N-acetylmethionine modification is found at M1. Disordered stretches follow at residues 1–54, 425–480, 522–545, and 565–611; these read METC…LKTD, LSHS…AYSN, TSSS…VRAS, and SKDS…SPGS. The span at 9 to 28 shows a compositional bias: polar residues; the sequence is ISRQENGQSTSKLCGTTQLD. 2 stretches are compositionally biased toward basic and acidic residues: residues 39-54 and 434-452; these read EPDR…LKTD and KMSE…KESN. A compositionally biased stretch (acidic residues) spans 468 to 480; sequence EPGDEDEEDAYSN. C2H2-type zinc fingers lie at residues 613–636, 644–667, and 699–723; these read IECP…TMMH, LKCP…KEKH, and FRCE…SDKH. The C2H2-type 4; degenerate zinc-finger motif lies at 767-789; it reads WRCEVCDYETNVARNLRIHMTSE. 3 C2H2-type zinc fingers span residues 917–941, 973–995, and 1021–1045; these read YQCK…TDKH, LKCN…TTNH, and YYCA…SVKH. The tract at residues 1098 to 1160 is disordered; it reads EQHEEAEGAI…EDVATKRSKP (63 aa). Composition is skewed to basic and acidic residues over residues 1120–1132 and 1148–1160; these read TSER…KNSN and AKEE…RSKP. Residue K1149 forms a Glycyl lysine isopeptide (Lys-Gly) (interchain with G-Cter in SUMO2) linkage. 2 C2H2-type zinc fingers span residues 1172-1195 and 1201-1224; these read YQCP…LSQH and ICCP…THLH. Residues 1254–1324 form a disordered region; that stretch reads AASEKSERDT…WNKNSSKDVK (71 aa). Positions 1281-1310 are enriched in basic and acidic residues; it reads MDDKSMAGLEDSKANVEVKNEEQKPTKEPL. Residues K1299 and K1324 each participate in a glycyl lysine isopeptide (Lys-Gly) (interchain with G-Cter in SUMO2) cross-link. C2H2-type zinc fingers lie at residues 1352–1374 and 1380–1403; these read YRCN…SQYH and TMCN…EAGH. A disordered region spans residues 1429–1480; sequence ETMSQDDHGLEQEMEREYEVDHEGKASPVGSDSSSIPDDMGSEPKRTLPFRK. Over residues 1433–1453 the composition is skewed to basic and acidic residues; it reads QDDHGLEQEMEREYEVDHEGK. The segment at 1496-1522 adopts a C2H2-type 12 zinc-finger fold; the sequence is YKCTVCKESFTQKNILLVHYNSVSHLH. Residue K1546 forms a Glycyl lysine isopeptide (Lys-Gly) (interchain with G-Cter in SUMO2) linkage. The segment at 1548 to 1572 adopts a C2H2-type 13 zinc-finger fold; the sequence is YKCSICNVAYSQSSTLEIHMRSVLH. Low complexity-rich tracts occupy residues 1761–1772 and 1779–1791; these read TQPQLQPQKQQQ and QQQQ…LLKQ. Disordered regions lie at residues 1761-1791 and 1809-1858; these read TQPQ…LLKQ and SYKE…IASG. A Glycyl lysine isopeptide (Lys-Gly) (interchain with G-Cter in SUMO2) cross-link involves residue K1790. Over residues 1809-1845 the composition is skewed to basic and acidic residues; sequence SYKEAEDISEKPEKPKQEFISEGEGLKEGKDTKKQKS. Residues 1901–1924 form a C2H2-type 14 zinc finger; sequence LECGTCGKLFSNVLILKSHQEHVH. Positions 1948 to 2024 are disordered; the sequence is YPISPSSPET…PPSAPPQVQL (77 aa). Composition is skewed to pro residues over residues 1955-1974 and 1991-2019; these read PETP…PPQP and QAPP…PSAP. 2 DNA-binding regions (homeobox) span residues 2084–2143 and 2181–2240; these read FKRP…RQRN and KRSS…RKSY. The C2H2-type 15; degenerate zinc-finger motif lies at 2267-2291; the sequence is YQCKKCNVVFPRIFDLITHQKKQCY. 2 disordered regions span residues 2289–2311 and 2328–2431; these read QCYK…MDAT and AKNA…SPLQ. Residues 2293-2309 are compositionally biased toward acidic residues; sequence DEDDDAQDESQTEDSMD. Over residues 2331–2345 the composition is skewed to low complexity; it reads AAAPAASSGSGTSTP. A compositionally biased stretch (basic and acidic residues) spans 2352 to 2370; the sequence is PEPEKTSPKPEYPAEKPKQ. Positions 2419–2431 are enriched in polar residues; that stretch reads SASQTPVPSSPLQ. The segment at 2448–2470 adopts a C2H2-type 16 zinc-finger fold; that stretch reads YQCDQCTVAFPTLELWQEHQHMH. Positions 2507–2530 are enriched in polar residues; it reads LGSSLTQMPPQASSSHTTAPTTVA. The tract at residues 2507–2564 is disordered; the sequence is LGSSLTQMPPQASSSHTTAPTTVAASLKRKLDDKEDNNCSEKEGGNSGEDQHRDKRLR. A compositionally biased stretch (basic and acidic residues) spans 2535–2559; it reads RKLDDKEDNNCSEKEGGNSGEDQHR. The homeobox 3 DNA-binding region spans 2560–2619; sequence DKRLRTTITPEQLEILYEKYLLDSNPTRKMLDHIAREVGLKKRVVQVWFQNTRARERKGQ. The C2H2-type 17 zinc finger occupies 2630-2653; it reads KRCPFCRALFKAKSALESHIRSRH. A Phosphoserine modification is found at S2663. The span at 2764–2785 shows a compositional bias: polar residues; it reads AISDATTGDEGNTEMESTTGSS. Disordered stretches follow at residues 2764 to 2811 and 2829 to 2885; these read AISD…TTPT and HFND…PGHK. Basic and acidic residues predominate over residues 2830–2839; the sequence is FNDKDGDHDQ. The segment covering 2862–2874 has biased composition (low complexity); the sequence is PSSPNPFGSSNPF. A DNA-binding region (homeobox 4) is located at residues 2884–2943; sequence HKRFRTQMSNLQLKVLKACFSDYRTPTMQECEMLGNEIGLPKRVVQVWFQNARAKEKKFK. The C2H2-type 18 zinc finger occupies 2962-2986; the sequence is PECTLCGVKYSARLSIRDHIFSKQH. Residues 3092–3110 show a composition bias toward low complexity; that stretch reads SATSSPALSLSSAPTKPLL. 2 disordered regions span residues 3092–3172 and 3281–3337; these read SATS…KEEK and LQKQ…LESK. The segment covering 3111-3125 has biased composition (pro residues); it reads QTPPPPPPPPPPPPS. Polar residues predominate over residues 3126-3135; sequence SSLSGQQTEQ. Residues 3153-3172 are compositionally biased toward basic and acidic residues; it reads IKEEELEATKPEKHPKKEEK. Residue K3154 forms a Glycyl lysine isopeptide (Lys-Gly) (interchain with G-Cter in SUMO2) linkage. Residues 3265 to 3294 adopt a coiled-coil conformation; the sequence is ALLQQYQQYQQNLQESLQKQQKQQQEQQQK. The segment covering 3281-3293 has biased composition (low complexity); sequence LQKQQKQQQEQQQ. Over residues 3294–3314 the composition is skewed to polar residues; that stretch reads KPVQAKTSKVESDQPQNSNDA. Over residues 3315–3337 the composition is skewed to basic and acidic residues; the sequence is SETKEDKSTATESTKEEPQLESK. The C2H2-type 19; degenerate zinc-finger motif lies at 3354–3378; it reads FICRKCQMMFTDEDAAVNHQKSFCY. The C2H2-type 20 zinc-finger motif lies at 3398-3422; that stretch reads YQCLACDVAISGNEALSQHLQSSLH. 2 disordered regions span residues 3443–3462 and 3511–3534; these read HSVC…AASS and STSG…ELSQ. Residues 3447-3462 show a composition bias toward low complexity; sequence SPNPNTTSTSQSAASS.

Belongs to the krueppel C2H2-type zinc-finger protein family. In terms of tissue distribution, expressed in brain, skeletal muscle and liver. Very low expression in stomach.

It is found in the nucleus. Functionally, may play a role in neural and muscle differentiation. May be involved in transcriptional regulation. This is Zinc finger homeobox protein 4 (ZFHX4) from Homo sapiens (Human).